A 620-amino-acid chain; its full sequence is Ferric/cupric reductase transmembrane component 7 (620 aa).

Topologically, residues 1-45 (MIEERDLVLSNGIHCIADIHSELYARLKKESQAATPWVYQKQYGK) are extracellular. Residues 46-66 (FVTYFVAVIIFLSLIKKLAFM) traverse the membrane as a helical segment. At 67–107 (YYDSSEEFLPEKKNSPTTPSVFLARIMTKLVAFNRYICYRK) the chain is on the cytoplasmic side. A helical transmembrane segment spans residues 108–128 (FPTLIFSYLGIPTSVGTFLVV). The Extracellular segment spans residues 129 to 167 (MATTLYTLLYCFVPHPFYRPCAGFGSPPLSVRAGIMAIS). One can recognise a Ferric oxidoreductase domain in the interval 161-320 (AGIMAISLVP…LAVKGYLRPG (160 aa)). Residues 168-188 (LVPFVFSLSGKINVIGWLVGL) traverse the membrane as a helical segment. At 189-194 (SYEKIN) the chain is on the cytoplasmic side. A helical transmembrane segment spans residues 195–215 (IYHQWASILCLFFSWVHVIPF). Residues His197 and His211 each contribute to the heme site. Residues 216-237 (LRQARHEGGYERMHQRWKASDM) lie on the Extracellular side of the membrane. A helical transmembrane segment spans residues 238 to 258 (WRSGVPPILFLNLLWLSSLPI). The Cytoplasmic portion of the chain corresponds to 259–265 (ARRHFYE). Residues 266–286 (IFLQLHWILAVGFYISLFYHV) traverse the membrane as a helical segment. Heme is bound by residues His271 and His285. The Extracellular segment spans residues 287-292 (YPELNS). A helical transmembrane segment spans residues 293 to 313 (HMYLVATIVVWFAQLFYRLAV). Residues 314-620 (KGYLRPGRSF…CYLHSESFGY (307 aa)) are Cytoplasmic-facing. The region spanning 321–419 (RSFMASTIAN…DGPYGGIERD (99 aa)) is the FAD-binding FR-type domain. 369 to 375 (HPFSIFP) is an FAD binding site. Residue 411 to 414 (GPYG) participates in NADP(+) binding. The disordered stretch occupies residues 519-543 (SDQSDLAKREKDTEFGQDDTESNST). The span at 523–532 (DLAKREKDTE) shows a compositional bias: basic and acidic residues. 578 to 579 (CF) lines the NADP(+) pocket.

Belongs to the ferric reductase (FRE) family. FAD is required as a cofactor.

It localises to the cell membrane. It carries out the reaction 2 a Fe(II)-siderophore + NADP(+) + H(+) = 2 a Fe(III)-siderophore + NADPH. Its function is as follows. Cell surface metalloreductase. May be involved in copper homeostasis. The protein is Ferric/cupric reductase transmembrane component 7 (FRE7) of Saccharomyces cerevisiae (strain ATCC 204508 / S288c) (Baker's yeast).